Reading from the N-terminus, the 590-residue chain is CTP synthase (590 aa).

An amidoligase domain region spans residues 1–281 (MPALRKHPQT…DAYVVRRLNL (281 aa)). Residue serine 23 participates in CTP binding. UTP is bound at residue serine 23. ATP is bound by residues 24–29 (SLGKGL) and aspartate 81. 2 residues coordinate Mg(2+): aspartate 81 and glutamate 155. CTP is bound by residues 162-164 (DIE), 202-207 (KTKPTQ), and lysine 238. Residues 202–207 (KTKPTQ) and lysine 238 each bind UTP. The 249-residue stretch at 306-554 (RIALVGKYID…IGAAIDYKAA (249 aa)) folds into the Glutamine amidotransferase type-1 domain. Position 369 (glycine 369) interacts with L-glutamine. Cysteine 396 acts as the Nucleophile; for glutamine hydrolysis in catalysis. L-glutamine contacts are provided by residues 397-400 (LGLQ), glutamate 419, and arginine 480. Active-site residues include histidine 527 and glutamate 529.

It belongs to the CTP synthase family. In terms of assembly, homotetramer.

The enzyme catalyses UTP + L-glutamine + ATP + H2O = CTP + L-glutamate + ADP + phosphate + 2 H(+). It carries out the reaction L-glutamine + H2O = L-glutamate + NH4(+). It catalyses the reaction UTP + NH4(+) + ATP = CTP + ADP + phosphate + 2 H(+). Its pathway is pyrimidine metabolism; CTP biosynthesis via de novo pathway; CTP from UDP: step 2/2. Allosterically activated by GTP, when glutamine is the substrate; GTP has no effect on the reaction when ammonia is the substrate. The allosteric effector GTP functions by stabilizing the protein conformation that binds the tetrahedral intermediate(s) formed during glutamine hydrolysis. Inhibited by the product CTP, via allosteric rather than competitive inhibition. Catalyzes the ATP-dependent amination of UTP to CTP with either L-glutamine or ammonia as the source of nitrogen. Regulates intracellular CTP levels through interactions with the four ribonucleotide triphosphates. The sequence is that of CTP synthase from Mycolicibacterium smegmatis (strain ATCC 700084 / mc(2)155) (Mycobacterium smegmatis).